We begin with the raw amino-acid sequence, 188 residues long: Elongation factor P (188 aa).

This sequence belongs to the elongation factor P family.

It localises to the cytoplasm. It participates in protein biosynthesis; polypeptide chain elongation. Involved in peptide bond synthesis. Stimulates efficient translation and peptide-bond synthesis on native or reconstituted 70S ribosomes in vitro. Probably functions indirectly by altering the affinity of the ribosome for aminoacyl-tRNA, thus increasing their reactivity as acceptors for peptidyl transferase. The protein is Elongation factor P of Wolbachia pipientis wMel.